A 150-amino-acid polypeptide reads, in one-letter code: Large ribosomal subunit protein bL9 (150 aa).

Belongs to the bacterial ribosomal protein bL9 family.

In terms of biological role, binds to the 23S rRNA. In Shewanella sediminis (strain HAW-EB3), this protein is Large ribosomal subunit protein bL9.